A 577-amino-acid polypeptide reads, in one-letter code: General transcription factor IIF subunit 1 (577 aa).

A disordered region spans residues 1-36; it reads MSSASKSTPSAASGSSTSAAAAAAASVASGSASSSA. Residues S183, S246, S250, and S252 each carry the phosphoserine modification. The segment at 236–508 is disordered; it reads KITDMDEWID…TSLPTSFSGG (273 aa). A compositionally biased stretch (acidic residues) spans 240 to 256; sequence MDEWIDSEDESDSEDEE. The span at 257 to 271 shows a compositional bias: basic and acidic residues; that stretch reads DKKKKEQEDSDDGKA. A compositionally biased stretch (basic residues) spans 272–285; sequence KGKGKKGADKKKKK. Over residues 289–304 the composition is skewed to acidic residues; it reads DDEAFEESDDGDEEGR. Residues 319–341 are compositionally biased toward basic and acidic residues; sequence PEAKVDKDMKGVAEEDALRKLLT. T341 is modified (phosphothreonine). Phosphoserine occurs at positions 342, 352, and 355. Residues 362–376 show a composition bias toward basic and acidic residues; the sequence is GEKKKKDKGKDEVSK. The span at 392-406 shows a compositional bias: low complexity; the sequence is SNGSGDSSTDFSSDS. The segment covering 423-437 has biased composition (basic and acidic residues); sequence VVKDKDKEKEKEKES. A compositionally biased stretch (low complexity) spans 438–456; that stretch reads AASSKVIASSSNANKSRSA. Residues S453 and S455 each carry the phosphoserine modification. Position 457 is a phosphothreonine (T457). 2 stretches are compositionally biased toward polar residues: residues 471–489 and 496–506; these read SLPSDLTASDTSNSPTSTP and EISTSLPTSFS. Phosphoserine occurs at positions 482 and 484. Residue T488 is modified to Phosphothreonine.

It belongs to the TFIIF alpha subunit family. Heterodimer of an alpha and a beta subunit. Post-translationally, phosphorylated on Ser and other residues by TAF1 and casein kinase II-like kinases.

The protein resides in the nucleus. In terms of biological role, TFIIF is a general transcription initiation factor that binds to RNA polymerase II and helps to recruit it to the initiation complex in collaboration with TFIIB. It promotes transcription elongation. This is General transcription factor IIF subunit 1 from Drosophila melanogaster (Fruit fly).